The chain runs to 89 residues: Myrmicitoxin(1)-Pr2a (89 aa).

An N-terminal signal peptide occupies residues 1–23; the sequence is MEIPKLLYIAVIAIGLSGSLTCA. Residues 24 to 61 constitute a propeptide that is removed on maturation; it reads TPLANPWADPEAEANPEAKAIAEATAEAIAEALAEPEP. Asparagine 88 carries the post-translational modification Asparagine amide.

This sequence belongs to the formicidae venom clade 1 family. As to expression, expressed by the venom gland.

The protein localises to the secreted. Its function is as follows. Vertebrate-selective toxin that causes pain by targeting voltage-gated sodium channels. The polypeptide is Myrmicitoxin(1)-Pr2a (Pogonomyrmex rugosus (Desert harvester ant)).